The following is a 941-amino-acid chain: Cilia- and flagella-associated protein 69 (941 aa).

It localises to the cell projection. It is found in the cilium. Its subcellular location is the flagellum. In terms of biological role, cilium- and flagellum-associated protein. In the olfactory epithelium, regulates the speed of activation and termination of the odor response and thus contributes to the robustness of olfactory transduction pathways. Required for sperm flagellum assembly and stability. The chain is Cilia- and flagella-associated protein 69 from Callithrix jacchus (White-tufted-ear marmoset).